The sequence spans 7603 residues: Cysteine repeat modular protein B (7603 aa).

Residue Asn-172 is glycosylated (N-linked (GlcNAc...) asparagine). Residues 223 to 243 (LVGFFLVPVFVVFFVLSSDAT) form a helical membrane-spanning segment. Disordered regions lie at residues 248 to 275 (GVGVLSARADREEKSSVSSSSRASSSPG) and 291 to 323 (RDTKAAGYTGRSSRRSARARRRRAADGGEGKGF). The span at 263-275 (SVSSSSRASSSPG) shows a compositional bias: low complexity. Basic residues predominate over residues 302 to 313 (SSRRSARARRRR). Residues Asn-329, Asn-589, Asn-848, Asn-1128, Asn-1183, and Asn-1402 are each glycosylated (N-linked (GlcNAc...) asparagine). The disordered stretch occupies residues 1554-1574 (VLRSRSGPSHPSSVSQPSPSF). Residues 1557–1573 (SRSGPSHPSSVSQPSPS) show a composition bias toward low complexity. 5 N-linked (GlcNAc...) asparagine glycosylation sites follow: Asn-1622, Asn-2578, Asn-2664, Asn-3094, and Asn-3126. Positions 3316 to 3445 (SNAVPEADEN…SDLTTSQPED (130 aa)) are disordered. Positions 3321 to 3340 (EADENQVESAEPEQNAEGET) are enriched in acidic residues. Low complexity predominate over residues 3342 to 3360 (EQGAEEAGGNAAEPGAESG). N-linked (GlcNAc...) asparagine glycosylation is found at Asn-3546, Asn-4367, Asn-4823, Asn-4901, Asn-5186, Asn-5546, and Asn-5666. Positions 5758–5799 (LAESRSDDGTVGDDVDLDDNALSGTTNSGWTTSSSNSERVRK) are disordered. Acidic residues predominate over residues 5767–5776 (TVGDDVDLDD). The segment covering 5780-5794 (SGTTNSGWTTSSSNS) has biased composition (low complexity). 5 N-linked (GlcNAc...) asparagine glycosylation sites follow: Asn-5806, Asn-5876, Asn-5998, Asn-6055, and Asn-6369. The disordered stretch occupies residues 6043 to 6115 (GEADHTPADG…EASEAESVSA (73 aa)). Residues 6051-6060 (DGSSNSSEDS) show a composition bias toward polar residues. The segment covering 6391 to 6405 (EFTDTGPAPDDHTDE) has biased composition (basic and acidic residues). The tract at residues 6391-6436 (EFTDTGPAPDDHTDEGGANLDSTGGSGEPSSSAPVDPSGENEGQLL) is disordered. Residues 6410 to 6423 (LDSTGGSGEPSSSA) show a composition bias toward polar residues. An N-linked (GlcNAc...) asparagine glycan is attached at Asn-6453. 8 helical membrane passes run 6520–6540 (IFILMRLVVCGIIWIITALTI), 6552–6572 (VLIRIVMSHMFFLSVYGLMPA), 6578–6598 (LAGWASIYRLFFFEFYFALHP), 6627–6647 (IFVPFIDAVLLTIIGAICVAT), 6770–6790 (LILGGVGLLVWGVGSIAGFVA), 6831–6851 (CVALIITMYVHANASGAQEIF), 6888–6908 (GLMVNIIIGVIFQGSYYFEVF), and 6912–6932 (GAIPLAVAIFYYLYVLWSLFV). The N-linked (GlcNAc...) asparagine glycan is linked to Asn-7013. Residues 7017–7037 (FVAALSDSLSQLVIAWCQFTI) traverse the membrane as a helical segment. A glycan (N-linked (GlcNAc...) asparagine) is linked at Asn-7061. Positions 7174-7242 (APQLRKENHA…RGLIESEIDD (69 aa)) form a coiled coil. The disordered stretch occupies residues 7379-7603 (AAPAAGLRSH…LKKPGSPKQE (225 aa)). The segment covering 7408 to 7417 (LGTNLSTPSA) has biased composition (polar residues). Asn-7411 is a glycosylation site (N-linked (GlcNAc...) asparagine). Low complexity-rich tracts occupy residues 7474-7496 (PTPSRSPSGTTRTVGSVVRSVTP), 7509-7541 (SEAPLISPSASSLASPRSLSPLTERRGSQSSDL), and 7560-7582 (GEAAPAEAPSPSPRSSSPLAAQP).

As to quaternary structure, component of a complex, at least composed of cysteine repeat modular protein A (CRMPa), cysteine repeat modular protein B (CRMPb), micronemal protein 15 (MIC15) and thrombospondin type 1 domain-containing protein (TSP1).

The protein resides in the cell membrane. It localises to the endoplasmic reticulum. It is found in the golgi apparatus. Functionally, required for triggering rhoptry secretion. Plays a role in host cell invasion. In Toxoplasma gondii, this protein is Cysteine repeat modular protein B.